A 358-amino-acid chain; its full sequence is Heat-inducible transcription repressor HrcA (358 aa).

Belongs to the HrcA family.

In terms of biological role, negative regulator of class I heat shock genes (grpE-dnaK-dnaJ and groELS operons). Prevents heat-shock induction of these operons. In Caulobacter vibrioides (strain ATCC 19089 / CIP 103742 / CB 15) (Caulobacter crescentus), this protein is Heat-inducible transcription repressor HrcA.